Consider the following 123-residue polypeptide: Large ribosomal subunit protein eL8 (123 aa).

Belongs to the eukaryotic ribosomal protein eL8 family. As to quaternary structure, part of the 50S ribosomal subunit. Probably part of the RNase P complex.

The protein resides in the cytoplasm. Functionally, multifunctional RNA-binding protein that recognizes the K-turn motif in ribosomal RNA, the RNA component of RNase P, box H/ACA, box C/D and box C'/D' sRNAs. The polypeptide is Large ribosomal subunit protein eL8 (Thermococcus kodakarensis (strain ATCC BAA-918 / JCM 12380 / KOD1) (Pyrococcus kodakaraensis (strain KOD1))).